A 213-amino-acid chain; its full sequence is Protein GET1 (213 aa).

Over 1-4 (MPSL) the chain is Lumenal. A helical transmembrane segment spans residues 5-24 (LLVVFILQFLLHIINTVGAS). The Cytoplasmic segment spans residues 25–110 (TVNDLLWILY…AFTSAVSTLR (86 aa)). Residues 41–68 (TSSSAQKAQKLKKEIVQLKRELGATSAQ) adopt a coiled-coil conformation. A helical membrane pass occupies residues 111 to 131 (WLGTQGLRFVLQFWFAKSPMF). The Lumenal portion of the chain corresponds to 132–155 (WMPAGWLPFYVEWILSFPRAPLGS). Residues 156–172 (VSINVWGIACASMIALA) traverse the membrane as a helical segment. The Cytoplasmic portion of the chain corresponds to 173–213 (AEGLAAVWVLATKRPTPIATEKKEAMAFAADQKSSGEKKEL).

The protein belongs to the WRB/GET1 family. Interacts with GET3.

The protein localises to the endoplasmic reticulum membrane. In terms of biological role, required for the post-translational delivery of tail-anchored (TA) proteins to the endoplasmic reticulum. Acts as a membrane receptor for soluble GET3, which recognizes and selectively binds the transmembrane domain of TA proteins in the cytosol. This Phaeosphaeria nodorum (strain SN15 / ATCC MYA-4574 / FGSC 10173) (Glume blotch fungus) protein is Protein GET1.